A 523-amino-acid chain; its full sequence is Putative L-type lectin-domain containing receptor kinase V.6 (523 aa).

The N-terminal stretch at 1–27 (MFSEVKVLQIVLVQWLTLFSFTYNSHG) is a signal peptide. A legume-lectin like region spans residues 28 to 242 (TYILDGSAVF…TGSIRALHYM (215 aa)). Residues 28–279 (TYILDGSAVF…KPSDRLRTVL (252 aa)) are Extracellular-facing. Residues Asn-47, Asn-59, Asn-112, and Asn-171 are each glycosylated (N-linked (GlcNAc...) asparagine). The helical transmembrane segment at 280 to 300 (AVCLTLALFAVFLASGIGFVF) threads the bilayer. At 301–523 (YLRHKKVKEV…TGRAVRVKFF (223 aa)) the chain is on the cytoplasmic side. The Protein kinase domain maps to 335-523 (FKEKQLLGKG…TGRAVRVKFF (189 aa)). ATP is bound by residues 341 to 349 (LGKGGFGQV) and Lys-364. Catalysis depends on Asp-464, which acts as the Proton acceptor.

The protein in the C-terminal section; belongs to the protein kinase superfamily. Ser/Thr protein kinase family. In the N-terminal section; belongs to the leguminous lectin family.

The protein localises to the cell membrane. The enzyme catalyses L-seryl-[protein] + ATP = O-phospho-L-seryl-[protein] + ADP + H(+). The catalysed reaction is L-threonyl-[protein] + ATP = O-phospho-L-threonyl-[protein] + ADP + H(+). This is Putative L-type lectin-domain containing receptor kinase V.6 (LECRK56) from Arabidopsis thaliana (Mouse-ear cress).